A 204-amino-acid chain; its full sequence is Large ribosomal subunit protein bL25 (204 aa).

This sequence belongs to the bacterial ribosomal protein bL25 family. CTC subfamily. Part of the 50S ribosomal subunit; part of the 5S rRNA/L5/L18/L25 subcomplex. Contacts the 5S rRNA. Binds to the 5S rRNA independently of L5 and L18.

In terms of biological role, this is one of the proteins that binds to the 5S RNA in the ribosome where it forms part of the central protuberance. The chain is Large ribosomal subunit protein bL25 from Wolbachia sp. subsp. Brugia malayi (strain TRS).